The primary structure comprises 304 residues: dTDP-4-dehydrorhamnose reductase (304 aa).

NADH-binding positions include Gly-15–Leu-17, Asp-41–Ile-42, and Ala-63–Thr-65. NADPH-binding positions include Gln-16–Leu-17, Asp-41–Ile-42, and Ala-63–Thr-65. Thr-104 to Asp-105 is a dTDP-beta-L-rhamnose binding site. NADH is bound by residues Tyr-132 and Lys-136. Positions 132 and 136 each coordinate NADPH. Tyr-132 (proton donor/acceptor) is an active-site residue. DTDP-beta-L-rhamnose is bound at residue Trp-157.

The protein belongs to the dTDP-4-dehydrorhamnose reductase family. It depends on Mg(2+) as a cofactor.

The enzyme catalyses dTDP-beta-L-rhamnose + NADP(+) = dTDP-4-dehydro-beta-L-rhamnose + NADPH + H(+). It participates in carbohydrate biosynthesis; dTDP-L-rhamnose biosynthesis. Involved in the biosynthesis of the dTDP-L-rhamnose which is a component of the critical linker, D-N-acetylglucosamine-L-rhamnose disaccharide, which connects the galactan region of arabinogalactan to peptidoglycan via a phosphodiester linkage. Catalyzes the reduction of dTDP-6-deoxy-L-lyxo-4-hexulose to yield dTDP-L-rhamnose. The chain is dTDP-4-dehydrorhamnose reductase from Mycobacterium tuberculosis (strain CDC 1551 / Oshkosh).